The sequence spans 618 residues: DNA mismatch repair protein MutL (618 aa).

Over residues 366–381 the composition is skewed to low complexity; the sequence is AEPTAAREPATPRYSG. A disordered region spans residues 366–403; the sequence is AEPTAAREPATPRYSGGASGGNGGRQSAGGWPHAQPGY. A compositionally biased stretch (gly residues) spans 382–392; sequence GASGGNGGRQS.

It belongs to the DNA mismatch repair MutL/HexB family.

Its function is as follows. This protein is involved in the repair of mismatches in DNA. It is required for dam-dependent methyl-directed DNA mismatch repair. May act as a 'molecular matchmaker', a protein that promotes the formation of a stable complex between two or more DNA-binding proteins in an ATP-dependent manner without itself being part of a final effector complex. The chain is DNA mismatch repair protein MutL from Salmonella schwarzengrund (strain CVM19633).